Consider the following 272-residue polypeptide: Orotidine 5'-phosphate decarboxylase (272 aa).

The Proton donor role is filled by lysine 95.

The protein belongs to the OMP decarboxylase family. Type 2 subfamily.

The catalysed reaction is orotidine 5'-phosphate + H(+) = UMP + CO2. The protein operates within pyrimidine metabolism; UMP biosynthesis via de novo pathway; UMP from orotate: step 2/2. The protein is Orotidine 5'-phosphate decarboxylase of Bordetella avium (strain 197N).